An 83-amino-acid chain; its full sequence is Small ribosomal subunit protein bS20 (83 aa).

The protein belongs to the bacterial ribosomal protein bS20 family.

In terms of biological role, binds directly to 16S ribosomal RNA. The chain is Small ribosomal subunit protein bS20 from Staphylococcus carnosus (strain TM300).